Consider the following 1406-residue polypeptide: MKDLLDIMKSPADNGKREFDSIQITLAAPETIKSWSHGEVKKPETINYRTFKPERDGLFCAKIFGPVKDFECLCGKYKRRKFQGVICEKCGVEVTTAKVRRDRMGHIDLASPVAHIWFLKSLPSRIGLLLDMTLRDIERVLYFESYVVTDPGMTSLEKYQLLDDEDYYKALEEFGDEFIAKMGAEAVQDLLKDIDIDLEIDDLREAIPNTGSETKLKKMSKRLKLLEAFRDSNNKPEWMVMSILPVLPPDLRPLVPLEGGRFATSDLNDLYRRVINRNNRLKRLLELNAPDIIVRNEKRMLQESVDALLDNGRRGRAITGSNKRPLKSLADMIKGKQGRFRQNLLGKRVDYSGRSVIVVGPTLRLHQCGLPKKMALELFKPFTYSKLLSHGMATTIKQAKKMVEREEPQVWDMLAMVIREHPVLLNRAPTLHRLGLQAFEPVLIEGKAIQLHPLVCTAFNADFDGDQMAVHVPLTLEAQLEARTLMMSTNNILSPANGDPIIVPSQDVVLGLYYISRSAVNAKGEGMIFATVNEALRAIGSNDLHVNAKIKVRVTETIFDEEGNSTKQTTLQETVAGRLLIWNVMPKGMRFAECNVEMTKKNISKLMNSCYRTRGVKESVIFADQLMYLGFAQATLSGVSIGIEDMVIPPMKKELIEAADAEVREIEQQFEQGFVTAGERYNKVVDIWSRTNDKVAKAMMDNLATDIVINAQGEEEEQKSFNSIFIMSDSGARGSAAQIRQLAGMRGLMAKPDGSIIETPIKANFREGLSVLQYFISTHGARKGLADTALKTANSGYLTRRLVDVAQDLVITENDCGTEKGVRMTPHIQGGEIIEKLGDRVLGRVVARDVMSREDEVLLAAGTLIDEHGVTVIDDNGIDEVWVRSVITCDVPHGVCAQCYGRDLARGHKVNIGESVGVMAAQSIGEPGTQLTMRTFHVGGAASSTSVDNSISARNTGFIRFHNMKTVDHVDGHLVIVSRSAEIGIADDVGRERERYKVPYGSSVLVKDGDEVESGQAIAKWDPHTHPIITEFAGKARFSDIIDGSTATVKIDEATGMSSFEILGSKDRPSNSKDLRPAIILDTTGGKEVVYFLPAETIIRVSDGEEVTAGSVLGRVPQATSGTKDITGGLPRVADLFEARRPKDHAIMAEMSGVVSFGSSTKGKNRFIITNEDGEVHEELIPKWRQINVFENETVARGEVIADGPLNPHDILRLQGETALANYIVDEVQDVYRLQGVKINDKHIEVIIRQMLRKVEITDAGDSNYFKGDQVEYADVKATNEKLLAEDKFPVQFERQLLGITKASLATESFISAASFQETTRVLTAAAVEGKVDELRGLKENVVVGRLIPAGTGLAYHAARKKAKEGKPAYDVESALDAAFDIEATTSAQDFRSFDEAFAQELSQDK.

Zn(2+) is bound by residues Cys-72, Cys-74, Cys-87, and Cys-90. Mg(2+)-binding residues include Asp-462, Asp-464, and Asp-466. Zn(2+)-binding residues include Cys-816, Cys-889, Cys-896, and Cys-899.

Belongs to the RNA polymerase beta' chain family. In terms of assembly, the RNAP catalytic core consists of 2 alpha, 1 beta, 1 beta' and 1 omega subunit. When a sigma factor is associated with the core the holoenzyme is formed, which can initiate transcription. Mg(2+) is required as a cofactor. Requires Zn(2+) as cofactor.

The enzyme catalyses RNA(n) + a ribonucleoside 5'-triphosphate = RNA(n+1) + diphosphate. Functionally, DNA-dependent RNA polymerase catalyzes the transcription of DNA into RNA using the four ribonucleoside triphosphates as substrates. This chain is DNA-directed RNA polymerase subunit beta', found in Psychrobacter sp. (strain PRwf-1).